The chain runs to 117 residues: Protein Wnt-6 (117 aa).

S1 carries the O-palmitoleoyl serine; by PORCN lipid modification. C83 and C98 form a disulfide bridge. A glycan (N-linked (GlcNAc...) asparagine) is linked at N84.

Belongs to the Wnt family. Post-translationally, palmitoleoylation is required for efficient binding to frizzled receptors. Depalmitoleoylation leads to Wnt signaling pathway inhibition.

It is found in the secreted. The protein resides in the extracellular space. It localises to the extracellular matrix. Ligand for members of the frizzled family of seven transmembrane receptors. Probable developmental protein. May be a signaling molecule which affects the development of discrete regions of tissues. Is likely to signal over only few cell diameters. The polypeptide is Protein Wnt-6 (WNT-6) (Evasterias troschelii (Mottled sea star)).